The following is a 445-amino-acid chain: T-box transcription factor TBX19 (445 aa).

Positions 45–218 form a DNA-binding region, T-box; that stretch reads LEDAPLWQRF…YNPFAKAFLD (174 aa).

It is found in the nucleus. Its function is as follows. Transcriptional regulator involved in developmental processes. Can activate POMC gene expression and repress the alpha glycoprotein subunit and thyroid-stimulating hormone beta promoters. This is T-box transcription factor TBX19 from Canis lupus familiaris (Dog).